The following is a 126-amino-acid chain: Large ribosomal subunit protein bL20 (126 aa).

It belongs to the bacterial ribosomal protein bL20 family.

Functionally, binds directly to 23S ribosomal RNA and is necessary for the in vitro assembly process of the 50S ribosomal subunit. It is not involved in the protein synthesizing functions of that subunit. This is Large ribosomal subunit protein bL20 from Nocardia farcinica (strain IFM 10152).